The following is a 405-amino-acid chain: Imidazolonepropionase (405 aa).

Residues H72 and H74 each contribute to the Fe(3+) site. Residues H72 and H74 each contribute to the Zn(2+) site. R81, Y144, and H177 together coordinate 4-imidazolone-5-propanoate. N-formimidoyl-L-glutamate is bound at residue Y144. H242 serves as a coordination point for Fe(3+). Position 242 (H242) interacts with Zn(2+). Q245 is a binding site for 4-imidazolone-5-propanoate. D317 serves as a coordination point for Fe(3+). D317 provides a ligand contact to Zn(2+). 2 residues coordinate N-formimidoyl-L-glutamate: N319 and G321. T322 provides a ligand contact to 4-imidazolone-5-propanoate.

It belongs to the metallo-dependent hydrolases superfamily. HutI family. Zn(2+) serves as cofactor. Requires Fe(3+) as cofactor.

It is found in the cytoplasm. The enzyme catalyses 4-imidazolone-5-propanoate + H2O = N-formimidoyl-L-glutamate. Its pathway is amino-acid degradation; L-histidine degradation into L-glutamate; N-formimidoyl-L-glutamate from L-histidine: step 3/3. Functionally, catalyzes the hydrolytic cleavage of the carbon-nitrogen bond in imidazolone-5-propanoate to yield N-formimidoyl-L-glutamate. It is the third step in the universal histidine degradation pathway. The sequence is that of Imidazolonepropionase from Erwinia tasmaniensis (strain DSM 17950 / CFBP 7177 / CIP 109463 / NCPPB 4357 / Et1/99).